We begin with the raw amino-acid sequence, 369 residues long: Peptide chain release factor 2 (369 aa).

An N5-methylglutamine modification is found at Q247.

The protein belongs to the prokaryotic/mitochondrial release factor family. Post-translationally, methylated by PrmC. Methylation increases the termination efficiency of RF2.

It localises to the cytoplasm. In terms of biological role, peptide chain release factor 2 directs the termination of translation in response to the peptide chain termination codons UGA and UAA. The sequence is that of Peptide chain release factor 2 from Phenylobacterium zucineum (strain HLK1).